We begin with the raw amino-acid sequence, 60 residues long: Large ribosomal subunit protein bL32B (60 aa).

A compositionally biased stretch (basic residues) spans 1–19 (MAVPKRKMSRANTRHRRSQ). Residues 1-20 (MAVPKRKMSRANTRHRRSQW) are disordered.

The protein belongs to the bacterial ribosomal protein bL32 family.

This chain is Large ribosomal subunit protein bL32B, found in Saccharopolyspora erythraea (strain ATCC 11635 / DSM 40517 / JCM 4748 / NBRC 13426 / NCIMB 8594 / NRRL 2338).